The chain runs to 435 residues: MIWKRSAVLRFYSVCGLLLLGSQGQFPLTQNVTVVEGGTAILTCRVDQNDNTSLQWSNPAQQTLYFDDKKALRDNRIELVRASWHELSISVSDVSLSDEGQYTCSLFTMPVKTSKAYLTVLGVPEKPQISGFSSPVMEGDLMQLTCKTSGSKPAADIRWFKNDKEIKDVKYLKEEDANRKTFTVSSTLDFRVDRSDDGVAVICRVDHESLNATPQVAMQVLEIHYTPSVKIIPSTPFPQEGQALTLTCESKGKPLPEPVLWTKDGAELPDPDRMVVSGRELNILFLNKTDNGTYRCEATNTIGQSSAEYVLIVHDVPNTLLPTTIIPSLTTAPVTTTVAITTSPSTSASSSSRRDPNSLAGQNGPDHALIGGIVAVVVFVTLCSIFLLGRYLARHKGTYLTNEAKGAEDAPDADTAIINAEGSQVNAEEKKEYFI.

The first 24 residues, methionine 1 to glycine 24, serve as a signal peptide directing secretion. Residues glutamine 25–histidine 367 lie on the Extracellular side of the membrane. One can recognise an Ig-like V-type domain in the interval proline 27–threonine 119. Asparagine 31 and asparagine 51 each carry an N-linked (GlcNAc...) asparagine glycan. Cystine bridges form between cysteine 44–cysteine 104, cysteine 146–cysteine 203, and cysteine 248–cysteine 296. Ig-like C2-type domains lie at proline 127–glutamine 219 and proline 227–isoleucine 312. A glycan (N-linked (GlcNAc...) asparagine) is linked at asparagine 291. Residues threonine 341–serine 351 are compositionally biased toward low complexity. Residues threonine 341–alanine 360 form a disordered region. A helical transmembrane segment spans residues alanine 368 to leucine 388. The Cytoplasmic segment spans residues glycine 389–isoleucine 435. At serine 423 the chain carries Phosphoserine.

Belongs to the nectin family. In terms of processing, glycosylation at Asn-51 reduces adhesive binding.

The protein resides in the cell membrane. It localises to the synapse. Its subcellular location is the cell projection. It is found in the axon. Its function is as follows. Adhesion molecule that engages in homo- and heterophilic interactions with the other nectin-like family members, leading to cell aggregation. Important for synapse organization, providing regulated trans-synaptic adhesion. Preferentially binds to oligodendrocytes. The chain is Cell adhesion molecule 2 (Cadm2) from Rattus norvegicus (Rat).